The chain runs to 103 residues: Large ribosomal subunit protein bL21 (103 aa).

The protein belongs to the bacterial ribosomal protein bL21 family. As to quaternary structure, part of the 50S ribosomal subunit. Contacts protein L20.

In terms of biological role, this protein binds to 23S rRNA in the presence of protein L20. This is Large ribosomal subunit protein bL21 from Vibrio parahaemolyticus serotype O3:K6 (strain RIMD 2210633).